A 121-amino-acid chain; its full sequence is MARIAGVDIPRDKRVVISLTYIFGIGRTTAQQILKEAGVSEDTRVRDLTEEELGKIRDVIDKLKVEGDLRREVSLNIKRLIEIGSYRGIRHRRGLPVRGQNTKNNARTRKGPRRTVANKKK.

A disordered region spans residues 93–121; it reads RGLPVRGQNTKNNARTRKGPRRTVANKKK. Residues 106-121 are compositionally biased toward basic residues; that stretch reads ARTRKGPRRTVANKKK.

This sequence belongs to the universal ribosomal protein uS13 family. In terms of assembly, part of the 30S ribosomal subunit. Forms a loose heterodimer with protein S19. Forms two bridges to the 50S subunit in the 70S ribosome.

In terms of biological role, located at the top of the head of the 30S subunit, it contacts several helices of the 16S rRNA. In the 70S ribosome it contacts the 23S rRNA (bridge B1a) and protein L5 of the 50S subunit (bridge B1b), connecting the 2 subunits; these bridges are implicated in subunit movement. Contacts the tRNAs in the A and P-sites. This chain is Small ribosomal subunit protein uS13, found in Bacillus licheniformis (strain ATCC 14580 / DSM 13 / JCM 2505 / CCUG 7422 / NBRC 12200 / NCIMB 9375 / NCTC 10341 / NRRL NRS-1264 / Gibson 46).